A 342-amino-acid polypeptide reads, in one-letter code: Trans-enoyl reductase himH (342 aa).

Residue 46–49 (TDWK) participates in NADP(+) binding. Substrate is bound at residue 133–140 (LSVSTAAS). Residues 168-171 (SSSV), 191-194 (SQAN), 255-256 (VM), and 329-330 (VS) each bind NADP(+).

The protein belongs to the zinc-containing alcohol dehydrogenase family. As to quaternary structure, monomer.

Its pathway is secondary metabolite biosynthesis. Its function is as follows. Trans-enoyl reductase; part of the him gene cluster that mediates the biosynthesis of himeic acid A, a ubiquitin-activating enzyme (E1) inhibitor. First, himA, together with the trans-enoyl reductase himH, catalyzes the formation of apolyketide chain, which is then condensed with leucine by the NRPS activity of himA. Dieckmann cyclization and release from himA gives a tetramic acid intermediate as the product of himA PKS-NRPS. HimG then catalyzes alpha-oxidation of the tetramic acid ring, with a subsequent rearrangement to yield apyrone intermediate. Two terminal methyl groups of polyketide and amide side chains are oxidized to carboxylic acids by himC cytochrome P450 monooxygenase to form himeic acid A. Himeic acid A is further converted to himeic acid B and C during culture growth. No gene responsible for pyrone to pyridone conversion was found in the him gene cluster and himeic acid A is non-enzymatically converted to himeic acid C by the incorporation of an ammonium nitrogen atom in a pH5 buffer, and to himeic acid B at a conversion ratio of 50% during incubation in MeOH for 5 days. In Aspergillus japonicus, this protein is Trans-enoyl reductase himH.